Here is a 355-residue protein sequence, read N- to C-terminus: Peptide chain release factor 1 (355 aa).

Gln-233 is subject to N5-methylglutamine.

It belongs to the prokaryotic/mitochondrial release factor family. Methylated by PrmC. Methylation increases the termination efficiency of RF1.

The protein resides in the cytoplasm. Its function is as follows. Peptide chain release factor 1 directs the termination of translation in response to the peptide chain termination codons UAG and UAA. The polypeptide is Peptide chain release factor 1 (Caldicellulosiruptor bescii (strain ATCC BAA-1888 / DSM 6725 / KCTC 15123 / Z-1320) (Anaerocellum thermophilum)).